Reading from the N-terminus, the 286-residue chain is MAAPAPGAGAASGGAGCSGGGAGAGAGSGSGAAGAGGRLPSRVLELVFSYLELSELRSCALVCKHWYRCLHGDENSEVWRSLCARSLAEEALRTDILCNLPSYKAKIRAFQHAFSTNDCSRNVYIKKNGFTLHRNPIAQSTDGARTKIGFSEGRHAWEVWWEGPLGTVAVIGIATKRAPMQCQGYVALLGSDDQSWGWNLVDNNLLHNGEVNGSFPQCNNAPKYQIGERIRVILDMEDKTLAFERGYEFLGVAFRGLPKVCLYPAVSAVYGNTEVTLVYLGKPLDG.

N-acetylalanine is present on Ala2. In terms of domain architecture, F-box spans 33-82 (AGAGGRLPSRVLELVFSYLELSELRSCALVCKHWYRCLHGDENSEVWRSL). Residues 92 to 284 (LRTDILCNLP…VTLVYLGKPL (193 aa)) form the B30.2/SPRY domain.

Belongs to the FBXO45/Fsn family. As to quaternary structure, forms a complex with MYCBP2 and SKP1. Interacts with HEY1; leading to FBXO45 nuclear translocation. Interacts (via SPRY domain) with CDH2.

It is found in the secreted. The protein localises to the postsynaptic cell membrane. Its subcellular location is the presynaptic cell membrane. The protein resides in the nucleus. The protein operates within protein modification; protein ubiquitination. Component of E3 ubiquitin ligase complex consisting of FBXO45, MYCBP2 and SKP1. Functions in substrate recognition but also plays an important role in assembly of the complex. Required for normal neuromuscular synaptogenesis, axon pathfinding and neuronal migration. Regulates neuron migration during brain development through interaction with N-cadherin/CDH2 after secretion via a non-classical mechanism. Plays a role in the regulation of neurotransmission at mature neurons. May control synaptic activity by controlling UNC13A via ubiquitin dependent pathway. Specifically recognizes TP73, promoting its ubiquitination and degradation. Polyubiquitinates NMNAT2, an adenylyltransferase that acts as an axon maintenance factor, and regulates its stability and degradation by the proteasome. Also acts by ubiquitinating FBXW7 during prolonged mitotic arrest and promotes FBXW7 proteasomal degradation. Induces subsequently an increase in mitotic slippage and prevents mitotic cell death. In response to influenza infection, mediates interferon-lambda receptor IFNLR1 polyubiquitination and degradation through the ubiquitin-proteasome system by docking with its intracellular receptor domain. This is F-box/SPRY domain-containing protein 1 (FBXO45) from Homo sapiens (Human).